Here is a 1006-residue protein sequence, read N- to C-terminus: E3 ubiquitin-protein ligase MIB1 (1006 aa).

The region spanning 6-74 (NNRVMVEGVG…AYDLRILDSA (69 aa)) is the MIB/HERC2 1 domain. The ZZ-type zinc finger occupies 80-132 (HDGTMCDTCRQQPIIGIRWKCAECTNYDLCTVCYHGDKHHLRHRFYRITTPGS). 8 residues coordinate Zn(2+): Cys-85, Cys-88, Cys-100, Cys-103, Cys-109, Cys-112, His-118, and His-122. Residues 143-221 (SKKITARGIF…MSDLKCVQDA (79 aa)) form the MIB/HERC2 2 domain. Ser-408 carries the phosphoserine modification. ANK repeat units lie at residues 430–460 (DLNE…DVNG), 463–492 (AGHT…DVEA), 496–525 (DGDR…DLNA), 529–558 (RRQT…HPSL), 562–591 (EGDT…DVTI), 595–627 (NGFN…IVDE), 631–661 (DGYT…NLDI), 665–694 (NQQT…KLDI), and 698–729 (DGDT…KVDA). RING-type zinc fingers lie at residues 819 to 854 (CMVC…LICK) and 866 to 901 (CVVC…VQCR). A coiled-coil region spans residues 935–962 (QKDKDNTNVNADVQKLQQQLQDIKEQTM). The segment at 963-996 (CPVCLDRLKNMIFLCGHGTCQLCGDRMSECPICR) adopts an RING-type 3 zinc-finger fold.

As to quaternary structure, interacts with CEP131 and PCM1. Post-translationally, ubiquitinated; possibly via autoubiquitination. Ubiquitinated; this modification is inhibited in response to cellular stress, such as ultraviolet light (UV) radiation or heat shock. Widely expressed at low level. Expressed at higher level in spinal cord, ovary, whole brain, and all specific brain regions examined.

Its subcellular location is the cytoplasm. It localises to the cytoskeleton. It is found in the microtubule organizing center. The protein resides in the centrosome. The protein localises to the centriolar satellite. Its subcellular location is the cell membrane. It catalyses the reaction S-ubiquitinyl-[E2 ubiquitin-conjugating enzyme]-L-cysteine + [acceptor protein]-L-lysine = [E2 ubiquitin-conjugating enzyme]-L-cysteine + N(6)-ubiquitinyl-[acceptor protein]-L-lysine.. It functions in the pathway protein modification; protein ubiquitination. E3 ubiquitin-protein ligase that mediates ubiquitination of Delta receptors, which act as ligands of Notch proteins. Positively regulates the Delta-mediated Notch signaling by ubiquitinating the intracellular domain of Delta, leading to endocytosis of Delta receptors. Probably mediates ubiquitination and subsequent proteasomal degradation of DAPK1, thereby antagonizing anti-apoptotic effects of DAPK1 to promote TNF-induced apoptosis. Involved in ubiquitination of centriolar satellite CEP131, CEP290 and PCM1 proteins and hence inhibits primary cilium formation in proliferating cells. Mediates 'Lys-63'-linked polyubiquitination of TBK1, which probably participates in kinase activation. In terms of biological role, (Microbial infection) During adenovirus infection, mediates ubiquitination of Core-capsid bridging protein. This allows viral genome delivery into nucleus for infection. This chain is E3 ubiquitin-protein ligase MIB1 (MIB1), found in Homo sapiens (Human).